The primary structure comprises 274 residues: 5'-nucleotidase SurE (274 aa).

A divalent metal cation is bound by residues Asp12, Asp13, Ser45, and Asn103.

It belongs to the SurE nucleotidase family. The cofactor is a divalent metal cation.

The protein localises to the cytoplasm. It catalyses the reaction a ribonucleoside 5'-phosphate + H2O = a ribonucleoside + phosphate. In terms of biological role, nucleotidase that shows phosphatase activity on nucleoside 5'-monophosphates. This is 5'-nucleotidase SurE from Chlamydia felis (strain Fe/C-56) (Chlamydophila felis).